A 377-amino-acid chain; its full sequence is DNA replication and repair protein RecF (377 aa).

An ATP-binding site is contributed by 30–37 (GNNGSGKS).

Belongs to the RecF family.

Its subcellular location is the cytoplasm. Functionally, the RecF protein is involved in DNA metabolism; it is required for DNA replication and normal SOS inducibility. RecF binds preferentially to single-stranded, linear DNA. It also seems to bind ATP. In Colwellia psychrerythraea (strain 34H / ATCC BAA-681) (Vibrio psychroerythus), this protein is DNA replication and repair protein RecF.